The sequence spans 2684 residues: MFGYNSNEEDCGDVAIIGIGLRFSSGDLNESISKPNQLFNSLLDGFNGIVNTSERWSDNYYLNGEINSVSAGLLPLDEWKRFDPIFFGINPSYDNVVTIDPQQRLLLKCVWEALEDSGIDPISLRGTNTSTFIGCSTTDYCSLQKSPFETQNNIFGSSNHSVANRIGYCFDFRGENFTIDSACSSSLNAINCGYNSIKSNKSNVSVVGGVNFILDPNISKSFTQLNILSPTGKCHSFSSDADGYVRSEGVGIVILKKLKDAIKDSNNIYCVIKGSSSNIDGNYDKLNFYSPSKSSQYENMKLAIKSTNGQINESDIDYCEAHGTGTPTGDPIELEGISRLFSHNNNNNNNNKQVLVGSIKSNIGHTEACSGVASLIKCCLMFKNKLFLQNINFKEPNPLINFKEWALKVVTEPIKFNENKTTVMLINNFGVTGSNVCLILSEFKEKRYNNNEYSSDNACEQIDIDSKVIEKKKFLIPLSSNSSTSLDNYKSIIVNNNYDDSNSSTRSFQEFVYNQIKFKSTSLIQKSVIIASDWNEFQDDDNQIKLKNSEGLISNITVEKKKSPLTVMVFCGQSSQYNKMALSLYENEPIFKESVNRFDKELFKYYGYSVLDRLRSVSDKDEISIHLPILAQPANIMIQISLYELYKHWGVSADIIVGHSLGEMSSSYSSGMIDFETLCYLIYHRSLAQNRTTGTGRMLSVNISYDEFIEKYQSKNNKYETLEIACYNSPTSIVIAGKEDLLNEISKEFKSNDIFCAMLGSLSSFHTSSQFMIKDEVCSLVFKSKLPSVPVFSTVTTNLFNDQTPYNANYVWENIYQPVSFTQTISNLYKHIESNDMGNEITFIEVAPHPTLQFYLNQMKSIQSSYFNHGKSVTIYSPLHKKKNDYNEFLKTISLLYVNNNFNINFKSQLTNINNNKIKSNSNSNSNKNNNKIIQFNDNNLPLYQWDDNEYFKLNPFHEKITSEGPPIQNLGNSIDSACSTYQTFIDIKKPPFQWLKGHQVSDKFYYPGMGYVQNLLSIYPNQDITISSLEFKSPLVLTEGNNQCLETTVSLLSKNEFNVKSHYKDQKTNQWILSSLGNFSLFKHNSINSEKLINIQALKDKCNFTTISKQEFYETIKIKTNLTYKGLFQGVKECSIGNNCSLAVVSLNEINNHTISNHSTIGRSLFNAATLDSCLHGSLIVVAQPIVLDRIEGFKLYSSNIPSSSSSSKDDNDCDSNNNNNSNNFIKELYVYTEAKAKTNYQSFSASVKIILPNGRLLMEISMVVCTSVSLVNPRSSIICKPPSNEIYTPWLQPKDSIINKPQQFKHLYSVDEFIAKEEDNQIISTELLLSLFYKHINVRCPTINLESLITLEYNQFKQLYYNNNGSVNENLFKFVFEILKSYSSNNILNHNNSENNNNENSNNESLYYFEQLYIKTTKIIAKQLFPLKDDDSFTDTPQSLFKNVYLDEFYKNFRAVQPLNNLLSEIIIEALKPILNQPIVFRILEAGGGTGSLSLLILEKICKLLNANPNSVIDIEFTWSDVSSSFFTEIKEKFSPFTAHKNFNIIHRVLDLEKPLFDQDLKPSYYDLVVISNVMHVVKKLKPTLDEIHNILTPNGQLLFIEPPYKSIYYDSIMGCFSQWWPSPDSDTELRPDRSCMNQEKWIKLLNETNYRDTIISGNDNLIFLIQTRKPSINEIISKQSSDSSLDQFNSFNKIILFGNNNNNGCSLQNSISSNQELKSKIININNFNEFQTWITNNYDNSDGFGNSKTLIIFLKSIEPINISNFKEITYEYIQINQLILKLELTNNFKHLLLSLDSTTDNYLSSSIIGAARYFVEYPQLDLYILNYDRISLKILNNSSGSSSSSSSSSSSSISGSSGSSYNSSNVSISSCKQQQLSLINYLINANNNIQKEFTINNNKVYYERYTRHSNKIKCNLQSKSFETNKDNLLIQLDSNLEYQLYSKRVEINSKEVEIEIKATGINYKDYLMHIGMVSSDLDLKYGKEYEVENGIGIENPMIGIDFSGIITRLGSDAERNKFKVGDHVCGVASKTSGSHVVIDYNFIYHQPLNYNHSISASIPSIYITSLHSIYGVGNLKSNESILIHSAASGIGISSLDLLKCKKHQGHIFLTVGSKDKEDYLIKNYGSFITAIYSSRNKDYVNEIKNKLIELGEVEQQGVDLILNTLSSEFMDSNFQCLNMSGRIVDLSVTHLTPNDYIVNNLFKYNMGYNNVEMLYFNGKMVRSYLKKIIKMINSNKLELSIPIIEYSNNQFKDAIEYVNQGKHIGKIIVNHNQDEFNRVYNNYQQNNNNNQIIMKHSYDISKLNMGKNILLTGQTGIILEIMKYLIRYSNHSIQNMIILSKSKLKWELELLINQTKFIKDNIIKFHFIQIDIEDSNKVNQVLNQLELNENITNIDSIIHFAFNNDIGDVQDVNMNRLNIAHGAKTIGAINLHNESINRSWKIKQFIIASSVASVLGSDQQCCYISACSVIDSLSKYRHSLGLPSLAINLGTIASTGFISRNNAIETMFKSSFLNLFSPQLVISSLDLFIQNQHQYPNYSLIDFNFEVMLTSPNYHLYKFDYEINIFKKSYQINTNFSSGSGSDNEFIHSTILNKISELLSIDESKVNEDLQLTQYGMDSLVIVQLKNFIDNQLGHNLITIHQLQHNKINQSIDIIKFGYLINKNKFKYKNNNINSPSEENF.

The region spanning 11-442 is the Ketosynthase family 3 (KS3) domain; it reads CGDVAIIGIG…GSNVCLILSE (432 aa). Catalysis depends on for beta-ketoacyl synthase activity residues Cys183, His322, and His365. Positions 650–683 are acyl/malonyl transferases; that stretch reads GVSADIIVGHSLGEMSSSYSSGMIDFETLCYLIY. Ser660 functions as the For acyl/malonyl transferase activity in the catalytic mechanism. The interval 958-1087 is N-terminal hotdog fold; it reads HEKITSEGPP…GNFSLFKHNS (130 aa). Residues 958–1276 form the PKS/mFAS DH domain; it reads HEKITSEGPP…CTSVSLVNPR (319 aa). The active-site Proton acceptor; for dehydratase activity is the His999. Residues 1104–1276 are C-terminal hotdog fold; the sequence is NFTTISKQEF…CTSVSLVNPR (173 aa). The active-site Proton donor; for dehydratase activity is the Asp1173. The disordered stretch occupies residues 1202–1221; it reads IPSSSSSSKDDNDCDSNNNN. The 78-residue stretch at 2585–2662 folds into the Carrier domain; it reads SDNEFIHSTI…QSIDIIKFGY (78 aa). Ser2622 carries the O-(pantetheine 4'-phosphoryl)serine modification.

Pantetheine 4'-phosphate is required as a cofactor.

Probable polyketide synthase. The sequence is that of Probable polyketide synthase 27 (pks27) from Dictyostelium discoideum (Social amoeba).